The chain runs to 151 residues: 3-hydroxyacyl-[acyl-carrier-protein] dehydratase FabZ (151 aa).

H57 is an active-site residue.

The protein belongs to the thioester dehydratase family. FabZ subfamily.

It is found in the cytoplasm. The enzyme catalyses a (3R)-hydroxyacyl-[ACP] = a (2E)-enoyl-[ACP] + H2O. Its function is as follows. Involved in unsaturated fatty acids biosynthesis. Catalyzes the dehydration of short chain beta-hydroxyacyl-ACPs and long chain saturated and unsaturated beta-hydroxyacyl-ACPs. The sequence is that of 3-hydroxyacyl-[acyl-carrier-protein] dehydratase FabZ from Tolumonas auensis (strain DSM 9187 / NBRC 110442 / TA 4).